The following is a 153-amino-acid chain: 3-hydroxyacyl-[acyl-carrier-protein] dehydratase FabZ (153 aa).

His-52 is a catalytic residue.

It belongs to the thioester dehydratase family. FabZ subfamily.

It localises to the cytoplasm. The catalysed reaction is a (3R)-hydroxyacyl-[ACP] = a (2E)-enoyl-[ACP] + H2O. Involved in unsaturated fatty acids biosynthesis. Catalyzes the dehydration of short chain beta-hydroxyacyl-ACPs and long chain saturated and unsaturated beta-hydroxyacyl-ACPs. The polypeptide is 3-hydroxyacyl-[acyl-carrier-protein] dehydratase FabZ (Magnetococcus marinus (strain ATCC BAA-1437 / JCM 17883 / MC-1)).